The following is a 570-amino-acid chain: Alpha-glucosidase (570 aa).

Catalysis depends on Asp206, which acts as the Nucleophile. Glu263 acts as the Proton donor in catalysis.

Belongs to the glycosyl hydrolase 13 family.

It catalyses the reaction Hydrolysis of terminal, non-reducing (1-&gt;4)-linked alpha-D-glucose residues with release of alpha-D-glucose.. The protein is Alpha-glucosidase (MAL2) of Candida albicans (Yeast).